The chain runs to 60 residues: Large ribosomal subunit protein bL33 (60 aa).

This sequence belongs to the bacterial ribosomal protein bL33 family.

In Flavobacterium johnsoniae (strain ATCC 17061 / DSM 2064 / JCM 8514 / BCRC 14874 / CCUG 350202 / NBRC 14942 / NCIMB 11054 / UW101) (Cytophaga johnsonae), this protein is Large ribosomal subunit protein bL33.